A 265-amino-acid chain; its full sequence is Energy-coupling factor transporter transmembrane protein EcfT (265 aa).

A run of 6 helical transmembrane segments spans residues 29–49, 63–83, 94–114, 117–137, 143–163, and 243–263; these read VMAF…ALMF, FLFF…TLLL, LVDL…AMMF, FVLI…IELT, ILAP…MLSI, and RFAD…LFWL.

Belongs to the energy-coupling factor EcfT family. In terms of assembly, forms a stable energy-coupling factor (ECF) transporter complex composed of 2 membrane-embedded substrate-binding proteins (S component), 2 ATP-binding proteins (A component) and 2 transmembrane proteins (T component). May be able to interact with more than 1 S component at a time.

Its subcellular location is the cell membrane. Transmembrane (T) component of an energy-coupling factor (ECF) ABC-transporter complex. Unlike classic ABC transporters this ECF transporter provides the energy necessary to transport a number of different substrates. This chain is Energy-coupling factor transporter transmembrane protein EcfT, found in Listeria innocua serovar 6a (strain ATCC BAA-680 / CLIP 11262).